The primary structure comprises 182 residues: Isopentenyl-diphosphate Delta-isomerase (182 aa).

Residues H25 and H32 each coordinate Mn(2+). The region spanning 30–164 (RLHLAFSSWL…PWAFSPWMVM (135 aa)) is the Nudix hydrolase domain. C67 is a catalytic residue. Residue C67 coordinates Mg(2+). Mn(2+) is bound at residue H69. Residue E87 coordinates Mg(2+). Residues E114 and E116 each contribute to the Mn(2+) site. The active site involves E116.

It belongs to the IPP isomerase type 1 family. Homodimer. It depends on Mg(2+) as a cofactor. The cofactor is Mn(2+).

Its subcellular location is the cytoplasm. The catalysed reaction is isopentenyl diphosphate = dimethylallyl diphosphate. Its pathway is isoprenoid biosynthesis; dimethylallyl diphosphate biosynthesis; dimethylallyl diphosphate from isopentenyl diphosphate: step 1/1. Catalyzes the 1,3-allylic rearrangement of the homoallylic substrate isopentenyl (IPP) to its highly electrophilic allylic isomer, dimethylallyl diphosphate (DMAPP). In Shigella dysenteriae serotype 1 (strain Sd197), this protein is Isopentenyl-diphosphate Delta-isomerase.